Here is a 192-residue protein sequence, read N- to C-terminus: 3-isopropylmalate dehydratase small subunit (192 aa).

Belongs to the LeuD family. LeuD type 1 subfamily. Heterodimer of LeuC and LeuD.

It carries out the reaction (2R,3S)-3-isopropylmalate = (2S)-2-isopropylmalate. It participates in amino-acid biosynthesis; L-leucine biosynthesis; L-leucine from 3-methyl-2-oxobutanoate: step 2/4. Its function is as follows. Catalyzes the isomerization between 2-isopropylmalate and 3-isopropylmalate, via the formation of 2-isopropylmaleate. The protein is 3-isopropylmalate dehydratase small subunit of Oceanobacillus iheyensis (strain DSM 14371 / CIP 107618 / JCM 11309 / KCTC 3954 / HTE831).